Reading from the N-terminus, the 92-residue chain is MARVTVEDAVEQIGNRFDMILVAARRARQIAVQGKDPMVEEMNDKPTVIALREIELGLVNAHTLDADERQSVREREAAEIAAVAAIAEGRSL.

The protein belongs to the RNA polymerase subunit omega family. As to quaternary structure, the RNAP catalytic core consists of 2 alpha, 1 beta, 1 beta' and 1 omega subunit. When a sigma factor is associated with the core the holoenzyme is formed, which can initiate transcription.

It carries out the reaction RNA(n) + a ribonucleoside 5'-triphosphate = RNA(n+1) + diphosphate. Functionally, promotes RNA polymerase assembly. Latches the N- and C-terminal regions of the beta' subunit thereby facilitating its interaction with the beta and alpha subunits. This is DNA-directed RNA polymerase subunit omega from Shewanella sp. (strain ANA-3).